The sequence spans 473 residues: Inactive pancreatic lipase-related protein 1 (473 aa).

Residues 1–17 form the signal peptide; it reads MLILWTIPLFLLGAAQG. 2 cysteine pairs are disulfide-bonded: Cys21/Cys27 and Cys109/Cys120. The Nucleophile role is filled by Ser171. Residue Asp194 is the Charge relay system of the active site. Ca(2+) contacts are provided by Glu205, Arg208, Asp210, and Asp213. An intrachain disulfide couples Cys255 to Cys279. The active-site Charge relay system is His281. Intrachain disulfides connect Cys303–Cys314, Cys317–Cys322, and Cys451–Cys467. Residues 356–467 enclose the PLAT domain; the sequence is WRYRVSLTFS…EDILLTLLPC (112 aa).

The protein belongs to the AB hydrolase superfamily. Lipase family. In terms of tissue distribution, expressed in female, but not in male, lacrimal gland. Expressed in male and female sublingual gland and pancreas.

It localises to the secreted. May function as inhibitor of dietary triglyceride digestion. Lacks detectable lipase activity (in vitro). The sequence is that of Inactive pancreatic lipase-related protein 1 (Pnliprp1) from Mus musculus (Mouse).